A 694-amino-acid polypeptide reads, in one-letter code: Elongation factor G (694 aa).

A tr-type G domain is found at K11–L285. GTP contacts are provided by residues A20 to T27, D84 to H88, and N138 to D141.

It belongs to the TRAFAC class translation factor GTPase superfamily. Classic translation factor GTPase family. EF-G/EF-2 subfamily.

It is found in the cytoplasm. Functionally, catalyzes the GTP-dependent ribosomal translocation step during translation elongation. During this step, the ribosome changes from the pre-translocational (PRE) to the post-translocational (POST) state as the newly formed A-site-bound peptidyl-tRNA and P-site-bound deacylated tRNA move to the P and E sites, respectively. Catalyzes the coordinated movement of the two tRNA molecules, the mRNA and conformational changes in the ribosome. The protein is Elongation factor G of Mycoplasma mobile (strain ATCC 43663 / 163K / NCTC 11711) (Mesomycoplasma mobile).